The chain runs to 60 residues: Large ribosomal subunit protein uL30 (60 aa).

The protein belongs to the universal ribosomal protein uL30 family. In terms of assembly, part of the 50S ribosomal subunit.

In Burkholderia mallei (strain NCTC 10247), this protein is Large ribosomal subunit protein uL30.